We begin with the raw amino-acid sequence, 1134 residues long: RNA-binding protein NAB6 (1134 aa).

An N-acetylserine modification is found at Ser-2. 3 disordered regions span residues 112-133 (RPVS…NTNN), 151-173 (RNNN…RNNS), and 464-491 (SVPS…SGIT). 2 stretches are compositionally biased toward low complexity: residues 115-133 (SNHN…NTNN) and 151-164 (RNNN…HNNN). Phosphoserine occurs at positions 464 and 467. Low complexity predominate over residues 471-489 (GNNNDSNNNGNNNKSNMSG). The RRM domain maps to 653-726 (RTIYIGNINP…NMLRVGWGHY (74 aa)). Disordered stretches follow at residues 918-959 (LDAH…FGGL) and 1043-1092 (NYRS…GSFA). Positions 1057–1081 (STLSYNHSKNNETPMQDIFTNGETA) are enriched in polar residues. Residues 1083 to 1092 (NRKKKRGSFA) are compositionally biased toward basic residues.

The protein resides in the cytoplasm. Its function is as follows. RNA-binding protein that associates with mRNAs encoding cell wall proteins. The protein is RNA-binding protein NAB6 (NAB6) of Saccharomyces cerevisiae (strain ATCC 204508 / S288c) (Baker's yeast).